The following is a 275-amino-acid chain: Autophagy protein 5 (275 aa).

Met1 carries the N-acetylmethionine modification. Lys130 participates in a covalent cross-link: Glycyl lysine isopeptide (Lys-Gly) (interchain with G-Cter in ATG12).

Belongs to the ATG5 family. In terms of assembly, forms a conjugate with ATG12. Part of the minor complex composed of 4 sets of ATG12-ATG5 and ATG16L1 (400 kDa); this complex interacts with ATG3 leading to disruption of ATG7 interaction and promotion of ATG8-like proteins lipidation. Forms an 800-kDa complex composed of ATG12-ATG5 and ATG16L2. The ATG12-ATG5 conjugate interacts with RAB33A; this interaction is bridged by ATG16L1 and promotes ATG12-ATG5-ATG16L1 complex recruitment to phagophores. Interacts with TECPR1; the interaction is direct and does not take place when ATG16L1 is associated with the ATG5-ATG12 conjugate. Interacts with DHX58/RIG-1, IFIH1/MDA5 and MAVS/IPS-1 in monomeric form as well as in ATG12-ATG5 conjugate form. The interaction with MAVS is further enhanced upon vesicular stomatitis virus (VSV) infection. Interacts with ATG3. Interacts with ATG7 and ATG10. Interacts with FADD. Interacts with Bassoon/BSN; this interaction is important for the regulation of presynaptic autophagy. Interacts with ATG16L2. Post-translationally, conjugated to ATG12; which is essential for autophagy, but is not required for association with isolation membrane. In terms of processing, acetylated by EP300. As to expression, ubiquitous.

The protein localises to the cytoplasm. It is found in the preautophagosomal structure membrane. Functionally, involved in autophagic vesicle formation. Conjugation with ATG12, through a ubiquitin-like conjugating system involving ATG7 as an E1-like activating enzyme and ATG10 as an E2-like conjugating enzyme, is essential for its function. The ATG12-ATG5 conjugate acts as an E3-like enzyme which is required for lipidation of ATG8 family proteins and their association to the vesicle membranes. Involved in mitochondrial quality control after oxidative damage, and in subsequent cellular longevity. Plays a critical role in multiple aspects of lymphocyte development and is essential for both B and T lymphocyte survival and proliferation. Required for optimal processing and presentation of antigens for MHC II. Involved in the maintenance of axon morphology and membrane structures, as well as in normal adipocyte differentiation. Promotes primary ciliogenesis through removal of OFD1 from centriolar satellites and degradation of IFT20 via the autophagic pathway. As part of the ATG8 conjugation system with ATG12 and ATG16L1, required for recruitment of LRRK2 to stressed lysosomes and induction of LRRK2 kinase activity in response to lysosomal stress. In terms of biological role, may play an important role in the apoptotic process, possibly within the modified cytoskeleton. Its expression is a relatively late event in the apoptotic process, occurring downstream of caspase activity. Plays a crucial role in IFN-gamma-induced autophagic cell death by interacting with FADD. Its function is as follows. (Microbial infection) May act as a proviral factor. In association with ATG12, negatively regulates the innate antiviral immune response by impairing the type I IFN production pathway upon vesicular stomatitis virus (VSV) infection. In Mus musculus (Mouse), this protein is Autophagy protein 5.